A 417-amino-acid chain; its full sequence is Gamma-glutamyl phosphate reductase (417 aa).

It belongs to the gamma-glutamyl phosphate reductase family.

The protein resides in the cytoplasm. The enzyme catalyses L-glutamate 5-semialdehyde + phosphate + NADP(+) = L-glutamyl 5-phosphate + NADPH + H(+). The protein operates within amino-acid biosynthesis; L-proline biosynthesis; L-glutamate 5-semialdehyde from L-glutamate: step 2/2. Its function is as follows. Catalyzes the NADPH-dependent reduction of L-glutamate 5-phosphate into L-glutamate 5-semialdehyde and phosphate. The product spontaneously undergoes cyclization to form 1-pyrroline-5-carboxylate. The protein is Gamma-glutamyl phosphate reductase of Desulfitobacterium hafniense (strain Y51).